The primary structure comprises 70 residues: Alpha-elapitoxin-Ast2a (70 aa).

5 disulfides stabilise this stretch: Cys3–Cys20, Cys13–Cys41, Cys26–Cys30, Cys45–Cys56, and Cys57–Cys62. Ser70 carries the post-translational modification Serine amide.

Belongs to the three-finger toxin family. Long-chain subfamily. Type II alpha-neurotoxin sub-subfamily. As to expression, expressed by the venom gland.

The protein resides in the secreted. Its function is as follows. Binds with high affinity to muscular (alpha-1/CHRNA1) and neuronal (alpha-7/CHRNA7) nicotinic acetylcholine receptor (nAChR) and inhibits acetylcholine from binding to the receptor, thereby impairing neuromuscular and neuronal transmission. This is Alpha-elapitoxin-Ast2a from Hydrophis stokesii (Stokes's sea snake).